We begin with the raw amino-acid sequence, 168 residues long: GTP-dependent dephospho-CoA kinase (168 aa).

GTP contacts are provided by aspartate 40, valine 41, valine 42, aspartate 59, and glutamate 112.

Belongs to the GTP-dependent DPCK family.

The catalysed reaction is 3'-dephospho-CoA + GTP = GDP + CoA + H(+). It participates in cofactor biosynthesis; coenzyme A biosynthesis. Catalyzes the GTP-dependent phosphorylation of the 3'-hydroxyl group of dephosphocoenzyme A to form coenzyme A (CoA). In Methanoregula boonei (strain DSM 21154 / JCM 14090 / 6A8), this protein is GTP-dependent dephospho-CoA kinase.